The following is an 886-amino-acid chain: Desmocollin-1 (886 aa).

A signal peptide spans 1–29 (MAVACAAPGSTFSKQLLFFLLVLVLFCDA). Positions 30–134 (CQKVSLHVPS…KEPVHNRSKR (105 aa)) are excised as a propeptide. N-linked (GlcNAc...) asparagine glycosylation is found at asparagine 130 and asparagine 165. 5 Cadherin domains span residues 135–242 (RWAP…APYF), 243–354 (ETKL…SPYF), 355–471 (TQTS…GPEC), 472–575 (QPPV…DHPP), and 576–682 (QIDK…EERD). At 135–691 (RWAPIPCSLM…DAKPNIILGK (557 aa)) the chain is on the extracellular side. Threonine 385 is modified (phosphothreonine). N-linked (GlcNAc...) (high mannose) asparagine glycosylation is present at asparagine 546. Residue asparagine 613 is glycosylated (N-linked (GlcNAc...) asparagine). Residues 692–714 (WAILAMVLGSALLLCILFTCFCV) form a helical membrane-spanning segment. Over 715-886 (TTTKRTVKKC…RTLAKTCVKK (172 aa)) the chain is Cytoplasmic.

In terms of assembly, binds to JUP/plakoglobin. In terms of tissue distribution, expressed in the epidermis and inner root sheaths of hair follicles (at protein level).

The protein resides in the cell membrane. The protein localises to the cell junction. It is found in the desmosome. In terms of biological role, a component of desmosome cell-cell junctions which are required for positive regulation of cellular adhesion. Required for desmosome adhesion strength between the granular layers of the epidermis, as a result moderates epidermal proliferation and differentiation. Is therefore required to maintain postnatal epidermal barrier function and normal hair follicle morphology into adulthood. The sequence is that of Desmocollin-1 (Dsc1) from Mus musculus (Mouse).